The primary structure comprises 344 residues: MPDRELISGDRQAEDAQFEVGLRPRRLADFTGQSKLKENLSIAIEAARMRGEAMDHVLLYGPPGLGKTTLASIIAEELQVQFTPTSGPVLQKKLDLTGILSNIRLHQVFFIDEIHRLLPDVEEMLYSALEDFRVDILVGVGPGARTHSLPMPKFTAIGATTRQGLVSAPLRGRFGLVLRLDPYNTEELKAIVKRSARLLTVEIEDGAAEEIARRCRGTPRIANRLLRRVRDYAQVRADGRINQKVAQTALNLLDVDRYGLDEIDQKIMMTILEKYRGGPVGVNTIAASISEESETIEEVYEPYLIQLGFLNRTPRGRVATELAYDYFKVKRKLREGDHPSLFEA.

Residues 1-183 are large ATPase domain (RuvB-L); that stretch reads MPDRELISGD…FGLVLRLDPY (183 aa). ATP contacts are provided by residues Leu-22, Arg-23, Gly-64, Lys-67, Thr-68, Thr-69, 130-132, Arg-173, Tyr-183, and Arg-220; that span reads EDF. Thr-68 contacts Mg(2+). Positions 184–254 are small ATPAse domain (RuvB-S); it reads NTEELKAIVK…VAQTALNLLD (71 aa). Residues 257–344 form a head domain (RuvB-H) region; that stretch reads RYGLDEIDQK…EGDHPSLFEA (88 aa). Positions 312 and 317 each coordinate DNA.

The protein belongs to the RuvB family. Homohexamer. Forms an RuvA(8)-RuvB(12)-Holliday junction (HJ) complex. HJ DNA is sandwiched between 2 RuvA tetramers; dsDNA enters through RuvA and exits via RuvB. An RuvB hexamer assembles on each DNA strand where it exits the tetramer. Each RuvB hexamer is contacted by two RuvA subunits (via domain III) on 2 adjacent RuvB subunits; this complex drives branch migration. In the full resolvosome a probable DNA-RuvA(4)-RuvB(12)-RuvC(2) complex forms which resolves the HJ.

It localises to the cytoplasm. The catalysed reaction is ATP + H2O = ADP + phosphate + H(+). Its function is as follows. The RuvA-RuvB-RuvC complex processes Holliday junction (HJ) DNA during genetic recombination and DNA repair, while the RuvA-RuvB complex plays an important role in the rescue of blocked DNA replication forks via replication fork reversal (RFR). RuvA specifically binds to HJ cruciform DNA, conferring on it an open structure. The RuvB hexamer acts as an ATP-dependent pump, pulling dsDNA into and through the RuvAB complex. RuvB forms 2 homohexamers on either side of HJ DNA bound by 1 or 2 RuvA tetramers; 4 subunits per hexamer contact DNA at a time. Coordinated motions by a converter formed by DNA-disengaged RuvB subunits stimulates ATP hydrolysis and nucleotide exchange. Immobilization of the converter enables RuvB to convert the ATP-contained energy into a lever motion, pulling 2 nucleotides of DNA out of the RuvA tetramer per ATP hydrolyzed, thus driving DNA branch migration. The RuvB motors rotate together with the DNA substrate, which together with the progressing nucleotide cycle form the mechanistic basis for DNA recombination by continuous HJ branch migration. Branch migration allows RuvC to scan DNA until it finds its consensus sequence, where it cleaves and resolves cruciform DNA. This Solibacter usitatus (strain Ellin6076) protein is Holliday junction branch migration complex subunit RuvB.